Here is a 118-residue protein sequence, read N- to C-terminus: Mitochondrial protein YPR099C (118 aa).

It is found in the mitochondrion. Functionally, essential for the functional mitochondria and respiratory growth. The chain is Mitochondrial protein YPR099C from Saccharomyces cerevisiae (strain ATCC 204508 / S288c) (Baker's yeast).